The sequence spans 907 residues: Lipoxygenase 1, chloroplastic (907 aa).

The N-terminal 49 residues, 1–49 (MALAKQIMGASLMDQKTSVFGSNLCLNHVLVNKHRLRLRKTRKNGSMVV), are a transit peptide targeting the chloroplast. The 125-residue stretch at 85–209 (DFFKDTIFRK…DLPNPRIFFT (125 aa)) folds into the PLAT domain. The 696-residue stretch at 212–907 (PYLPDETPVG…CRGVPNSISI (696 aa)) folds into the Lipoxygenase domain. Residues His-567, His-572, His-758, Asn-762, and Ile-907 each coordinate Fe cation.

It belongs to the lipoxygenase family. The cofactor is Fe cation. In terms of tissue distribution, confined to glandular trichomes in flowers, and, at low levels, in leaves.

It localises to the plastid. It is found in the chloroplast. It carries out the reaction (9Z,12Z,15Z)-octadecatrienoate + O2 = 13-hydroperoxy-(9Z,11E,15Z)-octadecatrienoate. Its pathway is lipid metabolism; oxylipin biosynthesis. It functions in the pathway isoprenoid biosynthesis. Its function is as follows. Component of the monoterpenoid pyrethrins biosynthesis; pyrethrins are widely used plant-derived pesticide. Plant lipoxygenases may be involved in a number of diverse aspects of plant physiology including growth and development, pest resistance, and senescence or responses to wounding. Catalyzes the hydroperoxidation of lipids containing a cis,cis-1,4-pentadiene structure. Mediates the peroxidation of linolenic acid leading to the production of 13-hydroperoxylinolenic acid. The protein is Lipoxygenase 1, chloroplastic of Tanacetum cinerariifolium (Dalmatian daisy).